A 585-amino-acid polypeptide reads, in one-letter code: MHTPPALPRRFQGGGRVRTPGSHRQGKDNLERDPSGGCVPDFLPQAQDSNHFIMESLFCESSGDSSLEKEFLGAPVGPSVSTPNSQHSSPSRSLSANSIKVEMYSDEESSRLLGPDERLLEKDDSVIVEDSLSEPLGYCDGSGPEPHSPGGIRLPNGKLKCDVCGMVCIGPNVLMVHKRSHTGERPFHCNQCGASFTQKGNLLRHIKLHSGEKPFKCPFCNYACRRRDALTGHLRTHSVSSPTVGKPYKCNYCGRSYKQQSTLEEHKERCHNYLQSLSTEAQALAGQPGDEIRDLEMVPDSMLHSSSERPTFIDRLANSLTKRKRSTPQKFVGEKQMRFSLSDLPYDVNSGGYEKDVELVAHHSLEPGFGSSLAFVGAEHLRPLRLPPTNCISELTPVISSVYTQMQPLPGRLELPGSREAGEGPEDLADGGPLLYRPRGPLTDPGASPSNGCQDSTDTESNHEDRVAGVVSLPQGPPPQPPPTIVVGRHSPAYAKEDPKPQEGLLRGTPGPSKEVLRVVGESGEPVKAFKCEHCRILFLDHVMFTIHMGCHGFRDPFECNICGYHSQDRYEFSSHIVRGEHKVG.

Disordered regions lie at residues Met1 to Leu43 and Glu68 to Ser98. The span at Gln25–Pro34 shows a compositional bias: basic and acidic residues. Residues Ser79–Ser98 show a composition bias toward polar residues. Lys100 is covalently cross-linked (Glycyl lysine isopeptide (Lys-Gly) (interchain with G-Cter in SUMO2)). The residue at position 105 (Ser105) is a Phosphoserine. C2H2-type zinc fingers lie at residues Leu159–His181, Phe187–His209, Phe215–His237, and Tyr248–His271. The tract at residues Ala281–Gly585 is interaction with FOXP3. Lys335 is subject to N6-acetyllysine. The segment at Pro410–Arg489 is disordered. The short motif at Pro425–Ala429 is the CTBP-binding motif PEDLA element. Over residues Gln475–Thr484 the composition is skewed to pro residues. Lys500 is covalently cross-linked (Glycyl lysine isopeptide (Lys-Gly) (interchain with G-Cter in SUMO2)). C2H2-type zinc fingers lie at residues Phe530 to His552 and Phe558 to His582.

Belongs to the Ikaros C2H2-type zinc-finger protein family. Self-associates. Interacts with other family members; IKZF1, IKZF2, IKZF3 and IKZF5. Interacts with CTBP2. Interacts with SPI1, MITF, FOXP3 and CTBP1. As to expression, highly expressed in skeletal muscle, low levels of expression in heart, thymus, kidney, liver, and spleen. Expressed in the hematopoietic cell lines MOLT-4, NALM-6 and K-562. Highly expressed in THP-1 and M-07e cell lines, which have characteristics of myeloid and early megakaryocytic cells respectively.

The protein localises to the nucleus. Functionally, DNA-binding protein that binds to the 5'GGGAATRCC-3' Ikaros-binding sequence. Transcriptional repressor. Interacts with SPI1 and MITF to repress transcription of the CTSK and ACP5 promoters via recruitment of corepressors SIN3A and CTBP2. May be involved in the development of central and peripheral nervous systems. Essential for the inhibitory function of regulatory T-cells (Treg). Mediates FOXP3-mediated gene silencing in regulatory T-cells (Treg) via recruitment of corepressor CTBP1. The polypeptide is Zinc finger protein Eos (IKZF4) (Homo sapiens (Human)).